The primary structure comprises 492 residues: High-affinity nickel transport protein (492 aa).

Topologically, residues methionine 1–arginine 24 are cytoplasmic. Residues alanine 25 to isoleucine 45 traverse the membrane as a helical segment. Residues cysteine 46–threonine 50 lie on the Extracellular side of the membrane. Residues aspartate 51–alanine 71 form a helical membrane-spanning segment. The Cytoplasmic segment spans residues aspartate 72–cysteine 94. The chain crosses the membrane as a helical span at residues glycine 95–valine 115. At serine 116 to alanine 136 the chain is on the extracellular side. A helical membrane pass occupies residues valine 137–isoleucine 157. At lysine 158 to glycine 210 the chain is on the cytoplasmic side. A helical transmembrane segment spans residues valine 211–isoleucine 231. Residues alanine 232–aspartate 239 are Extracellular-facing. A helical transmembrane segment spans residues alanine 240–valine 260. At aspartate 261–serine 382 the chain is on the cytoplasmic side. Residues isoleucine 383–glycine 403 form a helical membrane-spanning segment. Residues leucine 404–serine 439 are Extracellular-facing. N-linked (GlcNAc...) asparagine glycosylation is present at asparagine 408. The chain crosses the membrane as a helical span at residues glycine 440 to alanine 460. Topologically, residues lysine 461–alanine 492 are cytoplasmic.

The protein belongs to the NiCoT transporter (TC 2.A.52) family.

Its subcellular location is the cell membrane. In terms of biological role, high-affinity nickel-specific transporter responsible for nickel uptake and required for high levels of activity of urease URE1. Does not transport cobalt. Plays a role in host brain invasion. The polypeptide is High-affinity nickel transport protein (Cryptococcus neoformans var. grubii serotype A (strain H99 / ATCC 208821 / CBS 10515 / FGSC 9487) (Filobasidiella neoformans var. grubii)).